We begin with the raw amino-acid sequence, 86 residues long: Large ribosomal subunit protein uL23 (86 aa).

The protein belongs to the universal ribosomal protein uL23 family. As to quaternary structure, part of the 50S ribosomal subunit. Contacts protein L29.

Its function is as follows. Binds to 23S rRNA. One of the proteins that surrounds the polypeptide exit tunnel on the outside of the ribosome. In Methanococcus maripaludis (strain C5 / ATCC BAA-1333), this protein is Large ribosomal subunit protein uL23.